The primary structure comprises 142 residues: MRHGNGYRKLNRTASHRKAMFANMAASLIEHEQIVTTLPKAKEIRPIVEKLVTLGKRGDLHARRQAISAIRDVRLVAKLFDTLAARYATRNGGYIRIMKAGFRAGDNAPLAVVEFVERDVDAKGKADRARVEAEAAAEADAA.

Belongs to the bacterial ribosomal protein bL17 family. As to quaternary structure, part of the 50S ribosomal subunit. Contacts protein L32.

In Brucella abortus (strain S19), this protein is Large ribosomal subunit protein bL17.